A 299-amino-acid polypeptide reads, in one-letter code: MVTFLHIFFSILILVLFVLGNFANGFIALVNFIDLVKRKKISSADQILTALAVSRIGLLWALLLNWYLTVLNPAFYSVELRITSYNAWVVTNHFSMWLAASLSIFYLLKIANFSNLIFLHLKRRVRSVILVILLGPLTFLVCHLFVANMDESMSAEEYEGNMTGKLKLRNTVHLSYLTVTTLWSFIPFTLSLISFLMLICSLCKHVKKMQLHGEGSQDLSTKVHIKALQTLISFLLLCAIFFLFLIISIWNPRRLQNDPVVVVSKAVGNIYLALDSFILIWRTKKLKHTFLLILCQIRC.

Residue M1 is a topological domain, extracellular. The helical transmembrane segment at 2–22 (VTFLHIFFSILILVLFVLGNF) threads the bilayer. Over 23–55 (ANGFIALVNFIDLVKRKKISSADQILTALAVSR) the chain is Cytoplasmic. A helical membrane pass occupies residues 56-76 (IGLLWALLLNWYLTVLNPAFY). Topologically, residues 77–87 (SVELRITSYNA) are extracellular. Residues 88–108 (WVVTNHFSMWLAASLSIFYLL) form a helical membrane-spanning segment. Over 109-126 (KIANFSNLIFLHLKRRVR) the chain is Cytoplasmic. A helical membrane pass occupies residues 127–147 (SVILVILLGPLTFLVCHLFVA). The Extracellular portion of the chain corresponds to 148–181 (NMDESMSAEEYEGNMTGKLKLRNTVHLSYLTVTT). N-linked (GlcNAc...) asparagine glycosylation occurs at N161. A helical transmembrane segment spans residues 182-202 (LWSFIPFTLSLISFLMLICSL). The Cytoplasmic portion of the chain corresponds to 203-229 (CKHVKKMQLHGEGSQDLSTKVHIKALQ). A helical membrane pass occupies residues 230–250 (TLISFLLLCAIFFLFLIISIW). Residues 251-259 (NPRRLQNDP) are Extracellular-facing. A helical membrane pass occupies residues 260–280 (VVVVSKAVGNIYLALDSFILI). Topologically, residues 281–299 (WRTKKLKHTFLLILCQIRC) are cytoplasmic.

Belongs to the G-protein coupled receptor T2R family.

It localises to the membrane. Its function is as follows. Receptor that may play a role in the perception of bitterness and is gustducin-linked. May play a role in sensing the chemical composition of the gastrointestinal content. The activity of this receptor may stimulate alpha gustducin, mediate PLC-beta-2 activation and lead to the gating of TRPM5. The sequence is that of Taste receptor type 2 member 50 (TAS2R50) from Pongo pygmaeus (Bornean orangutan).